The primary structure comprises 295 residues: MMRILLFVATNLAVVLVASITLSLFGFNGFMAANGVDLNLSSLLVFCAVFGFAGSLVSLFISKWMAKMTTGTQIISQPRTRHEQWLLQTVEELSREAGIKMPEVGIFPAYEANAFATGWNRNDALVAVSQGLLERFSPDEVRAVLAHEIGHVANGDMVTLALVQGVVNTFVMFFARIIGNFVDKVIFKNEEGQGIAYYVATIVAELILGILASMIVMWFSRRREFRADEAGAQLAGTAAMIGALQRLRVEQGLPVHMPDTMKAFGINGGLKHGLAGLLMSHPPLEDRIEALRQRG.

Transmembrane regions (helical) follow at residues 4–24 and 41–61; these read ILLFVATNLAVVLVASITLSL and SSLLVFCAVFGFAGSLVSLFI. H147 contributes to the Zn(2+) binding site. E148 is a catalytic residue. H151 serves as a coordination point for Zn(2+). Transmembrane regions (helical) follow at residues 158–178 and 199–219; these read VTLALVQGVVNTFVMFFARII and VATIVAELILGILASMIVMWF. Zn(2+) is bound at residue E224.

The protein belongs to the peptidase M48B family. It depends on Zn(2+) as a cofactor.

It localises to the cell inner membrane. The chain is Protease HtpX from Pseudomonas putida (strain ATCC 47054 / DSM 6125 / CFBP 8728 / NCIMB 11950 / KT2440).